The following is a 287-amino-acid chain: MDGALLIDKPKGITSTEVVERVKEKLKARKAGHTGTLDPIATGLLIILINKATRFSQFFIGMPKTYRFTVKFGAETDTYDAQGKVVETYEGELNCDKLKEVLNEFRGEILQTPPPFSAKKIKGRRAYELARKGKKVELKPVKITVYSLELLSCNPREKEAEFLAEISSGGYVRSLAYDIGKKLGIGGYMKELRRLKIDEISVEEAVSLEEFLSSENPEEYVLPVDTLFRVIPEVRLNTFEAGKILQGKRILIKNYDYEGLVKIYEDSKFIGIGELKGGVLSPKRLLV.

Aspartate 38 (nucleophile) is an active-site residue.

Belongs to the pseudouridine synthase TruB family. Type 1 subfamily.

The catalysed reaction is uridine(55) in tRNA = pseudouridine(55) in tRNA. In terms of biological role, responsible for synthesis of pseudouridine from uracil-55 in the psi GC loop of transfer RNAs. This chain is tRNA pseudouridine synthase B, found in Aquifex aeolicus (strain VF5).